A 986-amino-acid polypeptide reads, in one-letter code: MVTTVISNVKRQSRASLVGKRNAGHRSAMSKLADRLAPCGPVLDPKAAERAYEAIAKRAGEAMGQVDAAWGSLAPVFAASPYLAGLARRDGKRLPRILGGDPGETLAAILAAAEAVAAEPDFETARRVLRELKADLHLLTAISDLGGVWDLDQVTGALTRFADAVLHAALAQAVRQEVSRGALTHVGDGSAGPAPGLFCVAMGKHGAFELNYSSDIDFSIFYAPEKLPVAEGHEPQAVAVRIANHLGRILQERTGDGYVFRIDLRLRPDPSSTPPAMPVDAAMDYYESVGQNWERAAHIKARIAAGDAAEGAAFLEGLQPFIWRRNLDFAAIADIHSIKRQIHTYKVDDRLTAKGADLKLGRGGIREIEFFVQTQQLILGGRQPDLRSPRTLDALQALAAAGHVTPEDAAWLTQAYKDLRALEHRAQMIADDQTHKLPESDVERKKVAALWGEGNLRVFDAAVGKMLKGVNLRYGRLFAGEEALSSRFGSLVFTGVEDDPETLATLKRMGFSSPERVAATIRGWHHGHIAATRTERGRELFTRLAPRLLDAANATGAPDQAFNRFSDFFSRLSSGVQIQSLFLAQPRLFELIVEVMAFAPRLAATMAKRPTALDALLDPTFFGPIETPAIAPWDPEDFEGAMDAARRLFRDQSFRIGVRVMSGTADARDIGRAFAELADLIIGGLAPAALAEVERIGGAFPGQVAVVALGKAGSREMTAKSDLDLMTLYVADDPRSMSALKDWSAEVFYARLTQRLTSALSAPTGEGTLYEVDLKLRPSGTKGPVAVSFAAFEHYYEREAETWELLALTRARVVWASSPDFKARAEGAIAAALRRPRAWKKTAADVIEMRQLMERERPGKGDWDLKLDPGGLVDIEFAAQFLQLAHAAADGPLRQNTGEALAALREAGLADAGALSRLEAAWRLEQDLSQLIKVALEDGADVEVEPKAFKALLAKAGGVTQFKSLKPKLAKAKAEARAAYEAVVKG.

Residues 1–482 form an adenylyl removase region; it reads MVTTVISNVK…RYGRLFAGEE (482 aa). The tract at residues 486 to 986 is adenylyl transferase; it reads SRFGSLVFTG…RAAYEAVVKG (501 aa).

The protein belongs to the GlnE family. It depends on Mg(2+) as a cofactor.

It carries out the reaction [glutamine synthetase]-O(4)-(5'-adenylyl)-L-tyrosine + phosphate = [glutamine synthetase]-L-tyrosine + ADP. The enzyme catalyses [glutamine synthetase]-L-tyrosine + ATP = [glutamine synthetase]-O(4)-(5'-adenylyl)-L-tyrosine + diphosphate. Functionally, involved in the regulation of glutamine synthetase GlnA, a key enzyme in the process to assimilate ammonia. When cellular nitrogen levels are high, the C-terminal adenylyl transferase (AT) inactivates GlnA by covalent transfer of an adenylyl group from ATP to specific tyrosine residue of GlnA, thus reducing its activity. Conversely, when nitrogen levels are low, the N-terminal adenylyl removase (AR) activates GlnA by removing the adenylyl group by phosphorolysis, increasing its activity. The regulatory region of GlnE binds the signal transduction protein PII (GlnB) which indicates the nitrogen status of the cell. The chain is Bifunctional glutamine synthetase adenylyltransferase/adenylyl-removing enzyme from Caulobacter vibrioides (strain ATCC 19089 / CIP 103742 / CB 15) (Caulobacter crescentus).